A 167-amino-acid chain; its full sequence is Mannose-specific lectin (167 aa).

An N-terminal signal peptide occupies residues 1–24 (MAFSISSTMIFLLSLALFSTLVSA). One can recognise a Bulb-type lectin domain in the interval 25–138 (DNHLLPGERL…PIFATGTNRF (114 aa)). Cysteines 53 and 76 form a disulfide.

Homotetramer. As to expression, expressed in the pseudobulb, with highest levels of expression in the non-swollen internode (at protein level).

The protein resides in the secreted. Functionally, mannose-specific lectin. Shows agglutinating activity towards chicken erythrocytes. Has antifungal activity against A.alternata and Collectotrichum species. The sequence is that of Mannose-specific lectin from Dendrobium findlayanum (Findlay's orchid).